The following is a 559-amino-acid chain: Putative protease Do-like 3, mitochondrial (559 aa).

The N-terminal 48 residues, 1 to 48 (MSFLCVRTVSRFRSLSRALAPGFLLLHGNAVPKTAVFFRQQSSNTRLF), are a transit peptide targeting the mitochondrion. The interval 59–81 (ENNSKSALKNKLPPGKEVSSKDA) is disordered. Residues 100 to 292 (VFTVSSKPRL…FLNAIEESGE (193 aa)) are serine protease. Residues H138, D169, and S247 each act as charge relay system in the active site. The PDZ domain occupies 300 to 380 (NLTYQKMDND…HLVSMKKPCE (81 aa)). Positions 538–559 (SEDLQPKQQNKRSKVPPKSKEH) are disordered. Basic residues predominate over residues 546 to 559 (QNKRSKVPPKSKEH).

Belongs to the peptidase S1C family.

It is found in the mitochondrion matrix. Functionally, putative serine protease. The protein is Putative protease Do-like 3, mitochondrial (DEGP3) of Arabidopsis thaliana (Mouse-ear cress).